The sequence spans 194 residues: Cilia- and flagella-associated protein 107 (194 aa).

Mn stretches follow at residues 45–60 (TPQSIYRKEYIPFPDH) and 95–107 (ISTYDDHYNRHGY).

As to quaternary structure, microtubule inner protein component of sperm flagellar doublet microtubules. In terms of tissue distribution, expressed in airway epithelial cells.

It is found in the cytoplasm. The protein localises to the cytoskeleton. Its subcellular location is the cilium axoneme. It localises to the flagellum axoneme. In terms of biological role, microtubule inner protein (MIP) part of the dynein-decorated doublet microtubules (DMTs) in cilia axoneme, which is required for motile cilia beating. The chain is Cilia- and flagella-associated protein 107 from Homo sapiens (Human).